The chain runs to 792 residues: Ribosome biogenesis protein BOP1 homolog (792 aa).

Over residues 1 to 11 (MTKKRTVKRKV) the composition is skewed to basic residues. The interval 1 to 167 (MTKKRTVKRK…ESDTSDEEDI (167 aa)) is disordered. 4 stretches are compositionally biased toward acidic residues: residues 44 to 53 (EDTTDDEGID), 60 to 72 (SSED…DEEG), 82 to 117 (EAEE…ESDA), and 157 to 166 (EESDTSDEED). 7 WD repeats span residues 453-494 (GHTD…RTIE), 496-534 (NDVV…KLLI), 578-620 (THFK…SQIP), 623-661 (KSKG…LIKK), 664-703 (TNSK…KPYQ), 707-746 (LHRN…DLLQ), and 762-792 (RDEF…RLYT).

It belongs to the WD repeat BOP1/ERB1 family.

It localises to the nucleus. The protein resides in the nucleolus. It is found in the nucleoplasm. Required for maturation of ribosomal RNAs and formation of the large ribosomal subunit. In Drosophila mojavensis (Fruit fly), this protein is Ribosome biogenesis protein BOP1 homolog.